A 118-amino-acid polypeptide reads, in one-letter code: Large ribosomal subunit protein bL20 (118 aa).

It belongs to the bacterial ribosomal protein bL20 family.

Its function is as follows. Binds directly to 23S ribosomal RNA and is necessary for the in vitro assembly process of the 50S ribosomal subunit. It is not involved in the protein synthesizing functions of that subunit. This is Large ribosomal subunit protein bL20 from Serratia proteamaculans (strain 568).